The sequence spans 159 residues: Cyclic pyranopterin monophosphate synthase (159 aa).

Residues 75–77 (LCH) and 113–114 (ME) contribute to the substrate site. Residue D128 is part of the active site.

It belongs to the MoaC family. As to quaternary structure, homohexamer; trimer of dimers.

The enzyme catalyses (8S)-3',8-cyclo-7,8-dihydroguanosine 5'-triphosphate = cyclic pyranopterin phosphate + diphosphate. It functions in the pathway cofactor biosynthesis; molybdopterin biosynthesis. Catalyzes the conversion of (8S)-3',8-cyclo-7,8-dihydroguanosine 5'-triphosphate to cyclic pyranopterin monophosphate (cPMP). In Thiobacillus denitrificans (strain ATCC 25259 / T1), this protein is Cyclic pyranopterin monophosphate synthase.